The following is a 953-amino-acid chain: Zinc finger protein 507 (953 aa).

Serine 95 carries the post-translational modification Phosphoserine. 3 C2H2-type zinc fingers span residues 125-147 (YQCS…IKQH), 155-185 (LMCS…ANIH), and 248-270 (YRCL…AWKH). Serine 427 is subject to Phosphoserine. The segment at 470-489 (KGLATDENAPPGRRRTNSES) is disordered. C2H2-type zinc fingers lie at residues 641-663 (YRCR…LRVH), 669-691 (YQCP…MIHH), 697-720 (YQCK…REQH), 758-780 (YRCD…RRIH), and 786-808 (YRCS…MWKH). Positions 831 to 888 (GRVLGKSPGKTQLKSSEESADPVTGSSENAVSSSELMSQTPSEVLGTNENEKLSPTSN) are disordered. Residues 854–888 (TGSSENAVSSSELMSQTPSEVLGTNENEKLSPTSN) show a composition bias toward polar residues. The C2H2-type 9 zinc-finger motif lies at 911-933 (FCCCICGFESTSKENLLDHMKEH).

It belongs to the krueppel C2H2-type zinc-finger protein family.

It is found in the nucleus. In terms of biological role, may be involved in transcriptional regulation. The polypeptide is Zinc finger protein 507 (ZNF507) (Homo sapiens (Human)).